A 319-amino-acid chain; its full sequence is Glutathione synthetase (319 aa).

One can recognise an ATP-grasp domain in the interval 129-314 (KLAILNFSRF…VAAMFADAVA (186 aa)). 155–211 (LKEHGDIIIKPLDGMGGMGIFRLTEKDPNIGSILETLMQLDSRTIMAQRYIPEIVHG) provides a ligand contact to ATP. Mg(2+)-binding residues include glutamate 285 and asparagine 287.

Belongs to the prokaryotic GSH synthase family. Mg(2+) serves as cofactor. It depends on Mn(2+) as a cofactor.

The catalysed reaction is gamma-L-glutamyl-L-cysteine + glycine + ATP = glutathione + ADP + phosphate + H(+). It functions in the pathway sulfur metabolism; glutathione biosynthesis; glutathione from L-cysteine and L-glutamate: step 2/2. The polypeptide is Glutathione synthetase (Neisseria meningitidis serogroup B (strain ATCC BAA-335 / MC58)).